The chain runs to 436 residues: 3-ketoacyl-CoA thiolase (436 aa).

Residue Cys99 is the Acyl-thioester intermediate of the active site. Residues His392 and Cys422 each act as proton acceptor in the active site.

The protein belongs to the thiolase-like superfamily. Thiolase family. As to quaternary structure, heterotetramer of two alpha chains (FadJ) and two beta chains (FadI).

It is found in the cytoplasm. The enzyme catalyses an acyl-CoA + acetyl-CoA = a 3-oxoacyl-CoA + CoA. It functions in the pathway lipid metabolism; fatty acid beta-oxidation. Functionally, catalyzes the final step of fatty acid oxidation in which acetyl-CoA is released and the CoA ester of a fatty acid two carbons shorter is formed. This chain is 3-ketoacyl-CoA thiolase, found in Escherichia coli (strain SMS-3-5 / SECEC).